Reading from the N-terminus, the 362-residue chain is UDP-N-acetylglucosamine--N-acetylmuramyl-(pentapeptide) pyrophosphoryl-undecaprenol N-acetylglucosamine transferase (362 aa).

Residues 15–17, N127, R165, S191, I247, 266–271, and Q292 each bind UDP-N-acetyl-alpha-D-glucosamine; these read TGG and ALTVSE.

It belongs to the glycosyltransferase 28 family. MurG subfamily.

It is found in the cell inner membrane. The catalysed reaction is di-trans,octa-cis-undecaprenyl diphospho-N-acetyl-alpha-D-muramoyl-L-alanyl-D-glutamyl-meso-2,6-diaminopimeloyl-D-alanyl-D-alanine + UDP-N-acetyl-alpha-D-glucosamine = di-trans,octa-cis-undecaprenyl diphospho-[N-acetyl-alpha-D-glucosaminyl-(1-&gt;4)]-N-acetyl-alpha-D-muramoyl-L-alanyl-D-glutamyl-meso-2,6-diaminopimeloyl-D-alanyl-D-alanine + UDP + H(+). It functions in the pathway cell wall biogenesis; peptidoglycan biosynthesis. Functionally, cell wall formation. Catalyzes the transfer of a GlcNAc subunit on undecaprenyl-pyrophosphoryl-MurNAc-pentapeptide (lipid intermediate I) to form undecaprenyl-pyrophosphoryl-MurNAc-(pentapeptide)GlcNAc (lipid intermediate II). The chain is UDP-N-acetylglucosamine--N-acetylmuramyl-(pentapeptide) pyrophosphoryl-undecaprenol N-acetylglucosamine transferase from Shewanella putrefaciens (strain CN-32 / ATCC BAA-453).